An 89-amino-acid polypeptide reads, in one-letter code: UPF0223 protein BCG9842_B1176 (89 aa).

Belongs to the UPF0223 family.

The chain is UPF0223 protein BCG9842_B1176 from Bacillus cereus (strain G9842).